The sequence spans 211 residues: 2,3-bisphosphoglycerate-dependent phosphoglycerate mutase (211 aa).

Substrate contacts are provided by residues 9–16 (RHGQSDWN), 22–23 (TG), Arg61, 88–91 (ERDY), Lys99, 115–116 (RR), and 159–160 (GN). His10 functions as the Tele-phosphohistidine intermediate in the catalytic mechanism. The active-site Proton donor/acceptor is Glu88.

The protein belongs to the phosphoglycerate mutase family. BPG-dependent PGAM subfamily. In terms of assembly, homodimer.

It carries out the reaction (2R)-2-phosphoglycerate = (2R)-3-phosphoglycerate. It participates in carbohydrate degradation; glycolysis; pyruvate from D-glyceraldehyde 3-phosphate: step 3/5. Its function is as follows. Catalyzes the interconversion of 2-phosphoglycerate and 3-phosphoglycerate. The protein is 2,3-bisphosphoglycerate-dependent phosphoglycerate mutase of Allorhizobium ampelinum (strain ATCC BAA-846 / DSM 112012 / S4) (Agrobacterium vitis (strain S4)).